A 243-amino-acid chain; its full sequence is Tegument protein UL14 homolog (243 aa).

It belongs to the alphaherpesvirinae HHV-1 UL14 protein family. Post-translationally, phosphorylated.

It localises to the virion tegument. The protein resides in the host cytoplasm. It is found in the host nucleus. Contributes to the nuclear transport of the viral transcriptional activator VP16 homolog during the early phase of infection. Therefore, participates indirectly in the regulation of the immediate-early gene expression. Additionally, seems to be important for efficient nuclear targeting of capsids. The polypeptide is Tegument protein UL14 homolog (MDV026) (Gallid herpesvirus 2 (strain Chicken/Md5/ATCC VR-987) (GaHV-2)).